A 1112-amino-acid chain; its full sequence is Phytochrome E (1112 aa).

The interval 1-20 is disordered; it reads MGFESSSSAASNMKPQPQKS. Residues 217–387 enclose the GAF domain; it reads DIGALCDTVV…AFGLQLQMEL (171 aa). Residue cysteine 322 participates in phytochromobilin binding. PAS domains are found at residues 595-666 and 732-803; these read FVCE…LQGE and DYKT…LISL. A Histidine kinase domain is found at 877 to 1096; the sequence is YVRQEIKNPL…FFQVDLQVKT (220 aa).

The protein belongs to the phytochrome family. In terms of assembly, homodimer. In terms of processing, contains one covalently linked phytochromobilin chromophore.

Regulatory photoreceptor which exists in two forms that are reversibly interconvertible by light: the Pr form that absorbs maximally in the red region of the spectrum and the Pfr form that absorbs maximally in the far-red region. Photoconversion of Pr to Pfr induces an array of morphogenic responses, whereas reconversion of Pfr to Pr cancels the induction of those responses. Pfr controls the expression of a number of nuclear genes including those encoding the small subunit of ribulose-bisphosphate carboxylase, chlorophyll A/B binding protein, protochlorophyllide reductase, rRNA, etc. It also controls the expression of its own gene(s) in a negative feedback fashion. The polypeptide is Phytochrome E (PHYE) (Arabidopsis thaliana (Mouse-ear cress)).